We begin with the raw amino-acid sequence, 104 residues long: Large ribosomal subunit protein uL24 (104 aa).

Belongs to the universal ribosomal protein uL24 family. As to quaternary structure, part of the 50S ribosomal subunit.

Functionally, one of two assembly initiator proteins, it binds directly to the 5'-end of the 23S rRNA, where it nucleates assembly of the 50S subunit. One of the proteins that surrounds the polypeptide exit tunnel on the outside of the subunit. This is Large ribosomal subunit protein uL24 from Azotobacter vinelandii (strain DJ / ATCC BAA-1303).